Consider the following 440-residue polypeptide: Argininosuccinate lyase (440 aa).

It belongs to the lyase 1 family. Argininosuccinate lyase subfamily.

It localises to the cytoplasm. The enzyme catalyses 2-(N(omega)-L-arginino)succinate = fumarate + L-arginine. It functions in the pathway amino-acid biosynthesis; L-arginine biosynthesis; L-arginine from L-ornithine and carbamoyl phosphate: step 3/3. This is Argininosuccinate lyase from Clostridium botulinum (strain ATCC 19397 / Type A).